Reading from the N-terminus, the 95-residue chain is Co-chaperonin GroES (95 aa).

It belongs to the GroES chaperonin family. In terms of assembly, heptamer of 7 subunits arranged in a ring. Interacts with the chaperonin GroEL.

The protein resides in the cytoplasm. Together with the chaperonin GroEL, plays an essential role in assisting protein folding. The GroEL-GroES system forms a nano-cage that allows encapsulation of the non-native substrate proteins and provides a physical environment optimized to promote and accelerate protein folding. GroES binds to the apical surface of the GroEL ring, thereby capping the opening of the GroEL channel. The sequence is that of Co-chaperonin GroES from Chlorobaculum parvum (strain DSM 263 / NCIMB 8327) (Chlorobium vibrioforme subsp. thiosulfatophilum).